The chain runs to 460 residues: tRNA modification GTPase MnmE (460 aa).

The (6S)-5-formyl-5,6,7,8-tetrahydrofolate site is built by Arg29, Glu91, and Arg131. The 158-residue stretch at 226-383 (GLRVALVGRP…LVQAVLERCG (158 aa)) folds into the TrmE-type G domain. Residue Asn236 participates in K(+) binding. GTP is bound by residues 236–241 (NVGKSS), 255–261 (TDLPGTT), and 280–283 (DTAG). Mg(2+) is bound at residue Ser240. Thr255, Leu257, and Thr260 together coordinate K(+). Thr261 serves as a coordination point for Mg(2+). Lys460 contributes to the (6S)-5-formyl-5,6,7,8-tetrahydrofolate binding site.

The protein belongs to the TRAFAC class TrmE-Era-EngA-EngB-Septin-like GTPase superfamily. TrmE GTPase family. As to quaternary structure, homodimer. Heterotetramer of two MnmE and two MnmG subunits. K(+) is required as a cofactor.

The protein localises to the cytoplasm. In terms of biological role, exhibits a very high intrinsic GTPase hydrolysis rate. Involved in the addition of a carboxymethylaminomethyl (cmnm) group at the wobble position (U34) of certain tRNAs, forming tRNA-cmnm(5)s(2)U34. This is tRNA modification GTPase MnmE from Synechococcus sp. (strain WH7803).